We begin with the raw amino-acid sequence, 372 residues long: 4-hydroxy-3-methylbut-2-en-1-yl diphosphate synthase (flavodoxin) (372 aa).

Residues Cys-270, Cys-273, Cys-305, and Glu-312 each coordinate [4Fe-4S] cluster.

Belongs to the IspG family. The cofactor is [4Fe-4S] cluster.

It carries out the reaction (2E)-4-hydroxy-3-methylbut-2-enyl diphosphate + oxidized [flavodoxin] + H2O + 2 H(+) = 2-C-methyl-D-erythritol 2,4-cyclic diphosphate + reduced [flavodoxin]. It functions in the pathway isoprenoid biosynthesis; isopentenyl diphosphate biosynthesis via DXP pathway; isopentenyl diphosphate from 1-deoxy-D-xylulose 5-phosphate: step 5/6. In terms of biological role, converts 2C-methyl-D-erythritol 2,4-cyclodiphosphate (ME-2,4cPP) into 1-hydroxy-2-methyl-2-(E)-butenyl 4-diphosphate. This is 4-hydroxy-3-methylbut-2-en-1-yl diphosphate synthase (flavodoxin) from Salmonella arizonae (strain ATCC BAA-731 / CDC346-86 / RSK2980).